The chain runs to 1025 residues: Multidrug resistance protein MdtC (1025 aa).

The next 12 membrane-spanning stretches (helical) occupy residues Phe-3 to Leu-23, Glu-333 to Leu-353, Ile-360 to Cys-380, Leu-387 to Leu-407, Val-431 to Leu-451, Phe-463 to Pro-483, Leu-528 to Pro-548, Val-853 to Ser-873, Val-875 to Leu-895, Leu-897 to Val-917, Pro-953 to Gly-973, and Ile-984 to Val-1004.

This sequence belongs to the resistance-nodulation-cell division (RND) (TC 2.A.6) family. MdtC subfamily. As to quaternary structure, part of a tripartite efflux system composed of MdtA, MdtB and MdtC. MdtC forms a heteromultimer with MdtB.

The protein localises to the cell inner membrane. This is Multidrug resistance protein MdtC from Shigella sonnei (strain Ss046).